A 434-amino-acid chain; its full sequence is Probable G-protein coupled receptor 150 (434 aa).

Over 1–3 (MED) the chain is Extracellular. A helical transmembrane segment spans residues 4-24 (LFSPSILPPAPNISVPILLGW). At 25–43 (GLNLTLGQGAPASGPPSRR) the chain is on the cytoplasmic side. Residues 44–64 (VRLVFLGVILVVAVAGNTTVL) traverse the membrane as a helical segment. The Extracellular segment spans residues 65 to 81 (CRLCGGGGPWAGPKRRK). The helical transmembrane segment at 82–102 (MDFLLVQLALADLYACGGTAL) threads the bilayer. The Cytoplasmic portion of the chain corresponds to 103-162 (SQLAWELLGEPRAATGDLACRFLQLLQASGRGASAHLVVLIALERRRAVRLPHGRPLPAR). The chain crosses the membrane as a helical span at residues 163–183 (ALAALGWLLALLLALPPAFVV). Residues 184 to 237 (RGDSPSPLPPPPPPTSLQPGAPPAARAWPGERRCHGIFAPLPRWHLQVYAFYEA) lie on the Extracellular side of the membrane. The disordered stretch occupies residues 188-210 (PSPLPPPPPPTSLQPGAPPAARA). Residues 189 to 205 (SPLPPPPPPTSLQPGAP) show a composition bias toward pro residues. The chain crosses the membrane as a helical span at residues 238 to 258 (VAGFVAPVTVLGVACGHLLSV). The Cytoplasmic portion of the chain corresponds to 259–293 (WWRHRPQAPAAAAPWSASPGRAPAPSALPRAKVQS). A helical transmembrane segment spans residues 294–314 (LKMSLLLALLFVGCELPYFAA). Topologically, residues 315–334 (RLAAAWSSGPAGDWEGEGLS) are extracellular. Residues 335 to 355 (AALRVVAMANSALNPFVYLFF) form a helical membrane-spanning segment. Residues 356 to 434 (QAGDCRLRRQ…PLPCSCESAF (79 aa)) are Cytoplasmic-facing. Residues 398–407 (WPHPHYHHAR) are compositionally biased toward basic residues. The interval 398–434 (WPHPHYHHARREPLDEGGLRPPPPRPRPLPCSCESAF) is disordered. A compositionally biased stretch (pro residues) spans 417 to 426 (RPPPPRPRPL).

Belongs to the G-protein coupled receptor 1 family.

The protein localises to the cell membrane. Orphan receptor. This is Probable G-protein coupled receptor 150 (GPR150) from Homo sapiens (Human).